The sequence spans 500 residues: Pyridine nucleotide-disulfide oxidoreductase domain-containing protein 1 (500 aa).

Methionine 1 carries the post-translational modification N-acetylmethionine.

The protein belongs to the class-I pyridine nucleotide-disulfide oxidoreductase family. PYROXD1 subfamily. It depends on FAD as a cofactor.

It is found in the nucleus. The protein resides in the cytoplasm. Its subcellular location is the myofibril. It localises to the sarcomere. Its function is as follows. Probable FAD-dependent oxidoreductase; involved in the cellular oxidative stress response. Required for normal sarcomere structure and muscle fiber integrity. This Pongo abelii (Sumatran orangutan) protein is Pyridine nucleotide-disulfide oxidoreductase domain-containing protein 1 (PYROXD1).